Here is a 243-residue protein sequence, read N- to C-terminus: MQQTKFGKMYLDHDSVVEYSEDEIVEADRITLGYKKRLSMIENQMRHLLEDFSLDVQQIEPILADLQKYYDAFLQLLQKRNKSLQCKRSTHQPVPSPMNSQTSTNAKVNLSGKLMKFQLNSVQKFDEENILRILQNKIEFEHYFQIDKGKKQKVLLLAVYQCLNGPTRLHKVLNIEGIIHNNSIRTILGKQVSSSKWTVFLYDVKLVLLAHRQDVPNLETSKMIVRYGDLFPCALYFKDHTAY.

The protein resides in the cytoplasm. Its function is as follows. May have a role in actin patch assembly. The protein is Protein HUA2 (HUA2) of Saccharomyces cerevisiae (strain ATCC 204508 / S288c) (Baker's yeast).